The primary structure comprises 130 residues: Small ribosomal subunit protein uS9 (130 aa).

Belongs to the universal ribosomal protein uS9 family.

The protein is Small ribosomal subunit protein uS9 of Anaeromyxobacter dehalogenans (strain 2CP-1 / ATCC BAA-258).